The primary structure comprises 75 residues: uncharacterized protein (75 aa).

This is an uncharacterized protein from Treponema pallidum (strain Nichols).